Here is a 473-residue protein sequence, read N- to C-terminus: Tryptophanase (473 aa).

Residue Lys-270 is modified to N6-(pyridoxal phosphate)lysine.

Belongs to the beta-eliminating lyase family. Homotetramer. The cofactor is pyridoxal 5'-phosphate.

It catalyses the reaction L-tryptophan + H2O = indole + pyruvate + NH4(+). The protein operates within amino-acid degradation; L-tryptophan degradation via pyruvate pathway; indole and pyruvate from L-tryptophan: step 1/1. The sequence is that of Tryptophanase from Vibrio vulnificus (strain CMCP6).